Reading from the N-terminus, the 55-residue chain is Large ribosomal subunit protein bL33 (55 aa).

The protein belongs to the bacterial ribosomal protein bL33 family.

The polypeptide is Large ribosomal subunit protein bL33 (Gluconacetobacter diazotrophicus (strain ATCC 49037 / DSM 5601 / CCUG 37298 / CIP 103539 / LMG 7603 / PAl5)).